The following is a 63-amino-acid chain: Alpha-conotoxin-like Am1.6 (63 aa).

The first 21 residues, 1-21, serve as a signal peptide directing secretion; the sequence is MGMRMMFTVFLLVVLATTVVS. Residues 22–46 constitute a propeptide that is removed on maturation; it reads FTSYRASDGRNAAAKASDLIALTVR. The tract at residues 50–52 is ser-Xaa-Pro motif, crucial for potent interaction with nAChR; the sequence is SRP.

This sequence belongs to the conotoxin A superfamily. Is not hydroxylated. Post-translationally, contains 2 disulfide bonds. As to expression, expressed by the venom duct.

The protein resides in the secreted. In terms of biological role, alpha-conotoxins act on postsynaptic membranes, they bind to the nicotinic acetylcholine receptors (nAChR) and thus inhibit them. This is Alpha-conotoxin-like Am1.6 from Conus amadis (Amadis cone).